Reading from the N-terminus, the 228-residue chain is Cytidylate kinase (228 aa).

12-20 contacts ATP; that stretch reads GPSGSGKGT.

Belongs to the cytidylate kinase family. Type 1 subfamily.

It is found in the cytoplasm. It catalyses the reaction CMP + ATP = CDP + ADP. The enzyme catalyses dCMP + ATP = dCDP + ADP. In Pseudomonas putida (strain W619), this protein is Cytidylate kinase.